We begin with the raw amino-acid sequence, 71 residues long: Small ribosomal subunit protein bS21 (71 aa).

Belongs to the bacterial ribosomal protein bS21 family.

In Cellvibrio japonicus (strain Ueda107) (Pseudomonas fluorescens subsp. cellulosa), this protein is Small ribosomal subunit protein bS21.